The chain runs to 945 residues: Splicing factor, suppressor of white-apricot homolog (945 aa).

Disordered stretches follow at residues Met1–Thr28 and Tyr157–Ala190. Basic and acidic residues-rich tracts occupy residues Ala9–Ala21 and Pro169–Ala178. The stretch at Ile211–Tyr253 is one SURP motif 1 repeat. The tract at residues Ala269–His298 is disordered. At Ser283 the chain carries Phosphoserine. Residues Asp284–Gly294 are compositionally biased toward acidic residues. At Lys315 the chain carries N6-acetyllysine. 2 disordered regions span residues Lys332–Val355 and Ser403–Thr438. The segment covering Ala335–Pro352 has biased composition (low complexity). Residues Val412–Thr425 are compositionally biased toward pro residues. A compositionally biased stretch (low complexity) spans Thr426–Thr438. Residues Val458–Tyr498 form an SURP motif 2 repeat. Disordered regions lie at residues Gly512–Gly566, Pro589–Arg680, and Gly714–Lys921. The segment covering Thr514 to Thr527 has biased composition (low complexity). Residues Ala528 to Ala540 are compositionally biased toward acidic residues. The span at Pro589–Asp598 shows a compositional bias: basic and acidic residues. Ser601 and Ser621 each carry phosphoserine. Low complexity predominate over residues Ser615–Val630. The stretch at Glu632 to Leu686 forms a coiled coil. Thr639 is subject to Phosphothreonine. Composition is skewed to basic and acidic residues over residues Leu643–Glu679 and Lys733–Glu752. 2 stretches are compositionally biased toward basic residues: residues Lys753–His787 and Thr795–Ala810. Over residues His811 to Ser821 the composition is skewed to basic and acidic residues. Ser829 and Ser831 each carry phosphoserine. Residues Ser835–Ala861 are compositionally biased toward basic residues. Residues Gln871–Ser894 show a composition bias toward low complexity. The segment covering Ser895–Gly908 has biased composition (basic and acidic residues). 2 positions are modified to phosphoserine: Ser899 and Ser903. The segment covering Gln909–Ser920 has biased composition (low complexity).

It localises to the nucleus. Functionally, plays a role as an alternative splicing regulator. Regulate its own expression at the level of RNA processing. Also regulates the splicing of fibronectin and CD45 genes. May act, at least in part, by interaction with other R/S-containing splicing factors. Represses the splicing of MAPT/Tau exon 10. This is Splicing factor, suppressor of white-apricot homolog (Sfswap) from Rattus norvegicus (Rat).